Reading from the N-terminus, the 354-residue chain is L-lactate dehydrogenase (354 aa).

NAD(+) is bound by residues 73-78 and arginine 120; that span reads DAVPDK. Residues arginine 127, asparagine 159, and arginine 190 each contribute to the substrate site. Asparagine 159 lines the NAD(+) pocket. Catalysis depends on histidine 214, which acts as the Proton acceptor. Threonine 269 lines the substrate pocket. Residues 302-332 form a disordered region; that stretch reads HGIPDGTTSSSACPPRRPRRRPGRREMELTE.

Belongs to the LDH/MDH superfamily. LDH family. As to quaternary structure, homotetramer.

It catalyses the reaction (S)-lactate + NAD(+) = pyruvate + NADH + H(+). Its pathway is fermentation; pyruvate fermentation to lactate; (S)-lactate from pyruvate: step 1/1. The chain is L-lactate dehydrogenase from Zea mays (Maize).